The primary structure comprises 264 residues: 3-methyl-2-oxobutanoate hydroxymethyltransferase (264 aa).

Mg(2+)-binding residues include Asp-45 and Asp-84. 3-methyl-2-oxobutanoate-binding positions include 45 to 46, Asp-84, and Lys-112; that span reads DS. Glu-114 is a binding site for Mg(2+). The Proton acceptor role is filled by Glu-181.

It belongs to the PanB family. In terms of assembly, homodecamer; pentamer of dimers. Requires Mg(2+) as cofactor.

The protein resides in the cytoplasm. The catalysed reaction is 3-methyl-2-oxobutanoate + (6R)-5,10-methylene-5,6,7,8-tetrahydrofolate + H2O = 2-dehydropantoate + (6S)-5,6,7,8-tetrahydrofolate. It participates in cofactor biosynthesis; (R)-pantothenate biosynthesis; (R)-pantoate from 3-methyl-2-oxobutanoate: step 1/2. Functionally, catalyzes the reversible reaction in which hydroxymethyl group from 5,10-methylenetetrahydrofolate is transferred onto alpha-ketoisovalerate to form ketopantoate. The protein is 3-methyl-2-oxobutanoate hydroxymethyltransferase of Alteromonas mediterranea (strain DSM 17117 / CIP 110805 / LMG 28347 / Deep ecotype).